Here is a 119-residue protein sequence, read N- to C-terminus: Circadian clock oscillator protein KaiB (119 aa).

It belongs to the KaiB family. In terms of assembly, may undergo a major conformational rearrangment; in the free state forms homooligomers. When bound to KaiC switches to a monomeric thioredoxin-fold (KaiB(fs)). The active oscillator complex is probably KaiC(6):KaiB(6).

Its function is as follows. Component of the KaiBC clock protein complex, which constitutes the main circadian regulator in cyanobacteria; it may modify the ATPase activity of KaiC. Functionally, may be a metamorphic protein which reversibly switches between an inactive tetrameric fold and a rare, thioredoxin-like monomeric fold (KaiB(fs)). KaiB(fs) binds phospho-KaiC, and perhaps clock output effectors. This is Circadian clock oscillator protein KaiB from Prochlorococcus marinus (strain MIT 9313).